A 1521-amino-acid polypeptide reads, in one-letter code: Retroelement silencing factor 1 (1521 aa).

Residue Lys-223 forms a Glycyl lysine isopeptide (Lys-Gly) (interchain with G-Cter in SUMO2) linkage. The segment at 621–640 is disordered; it reads EKQHKPIQGDPDIADSSLGK. Ser-910 carries the post-translational modification Phosphoserine. At Thr-996 the chain carries Phosphothreonine. Composition is skewed to polar residues over residues 1093–1105 and 1124–1142; these read KNMP…SQES and LSSN…QSVS. Disordered stretches follow at residues 1093–1147, 1204–1230, and 1312–1335; these read KNMP…EKKK, ERAS…KSTR, and EASR…PDKM. Phosphoserine is present on Ser-1142. Positions 1214-1228 are enriched in low complexity; it reads PSPESSDPKGSSSKS. Basic and acidic residues predominate over residues 1325–1335; that stretch reads GKFDGKQPDKM. Lys-1411 is covalently cross-linked (Glycyl lysine isopeptide (Lys-Gly) (interchain with G-Cter in SUMO2)). Disordered stretches follow at residues 1425 to 1444 and 1457 to 1485; these read DKQD…VQVS and IPTR…SADE. Positions 1467–1476 are enriched in basic and acidic residues; sequence SQRDSADSRL. Residues Ser-1482 and Ser-1514 each carry the phosphoserine modification.

As to quaternary structure, interacts with SETDB1.

The protein localises to the nucleus. Plays a role in the regulation of imprinted gene expression, regulates repressive epigenetic modifications associated with SETDB1. Required for the recruitment or accumulation of SETDB1 to the endogenous retroviruses (ERVs) and maintenance of repressive chromatin configuration, contributing to a subset of the SETDB1-dependent ERV silencing in embryonic stem cells. This Mus musculus (Mouse) protein is Retroelement silencing factor 1.